The sequence spans 782 residues: MRQKTLDVLEFEKIKSLVANETISDLGLEKVNQMMPATNFETVVFQMEETDEIAQIYNKHRLPSLSGLSKVSAFIHRADIGGVLNVSELNLIKRLIQVQNQFKTFYNQLVEEDEGVKYPILDDKMNQLPVLTDLFHQINETCDTYDLYDNASYELQGIRSKISSTNQRIRQNLDRIVKSQANQKKLSDAIVTVRNERNVIPVKAEYRQDFNGIVHDQSASGQTLYIEPSSVVEMNNQISRLRHDEAIEKERILTQLTGYVAADKDALLVAEQVMGQLDFLIAKARYSRSVKGTKPIFKEDRTVYLPKAYHPLLNRETVVANTIEFMEDIETVIITGPNTGGKTVTLKTLGLIIVMAQSGLLIPTLDGSQLSVFKNVYCDIGDEQSIEQSLSTFSSHMTNIVEILKHADKHSLVLFDELGAGTDPSEGAALAMSILDHVRKIGSLVMATTHYPELKAYSYNREGVMNASVEFDVDTLSPTYKLLMGVPGRSNAFDISKKLGLSLNIINKAKTMIGTDEKEINEMIESLERNYKRVETQRLELDRLVKEAEQVHDDLSKQYQQFQNYEKSLIEEAKEKANQKIKAATKEADDIIKDLRQLREQKGADVKEHELIDKKKRLDDHYEAKSIKQNVQKQKYDKIVAGDEVKVLSYGQKGEVLEIVNDEEAIVQMGIIKMKLPIEDLEKKQKEKVKPTKMVTRQNRQTIKTELDLRGYRYEDALIELDQYLDQAVLSNYEQVYIIHGKGTGALQKGVQQHLKKHKSVSDFRGGMPSEGGFGVTVATLK.

336–343 (GPNTGGKT) serves as a coordination point for ATP. A Smr domain is found at 707–782 (LDLRGYRYED…GFGVTVATLK (76 aa)).

The protein belongs to the DNA mismatch repair MutS family. MutS2 subfamily. Homodimer. Binds to stalled ribosomes, contacting rRNA.

In terms of biological role, endonuclease that is involved in the suppression of homologous recombination and thus may have a key role in the control of bacterial genetic diversity. Functionally, acts as a ribosome collision sensor, splitting the ribosome into its 2 subunits. Detects stalled/collided 70S ribosomes which it binds and splits by an ATP-hydrolysis driven conformational change. Acts upstream of the ribosome quality control system (RQC), a ribosome-associated complex that mediates the extraction of incompletely synthesized nascent chains from stalled ribosomes and their subsequent degradation. Probably generates substrates for RQC. In Staphylococcus aureus (strain MSSA476), this protein is Endonuclease MutS2.